The sequence spans 134 residues: Phosphoribosyl-AMP cyclohydrolase (134 aa).

Residue Asp-80 coordinates Mg(2+). Zn(2+) is bound at residue Cys-81. Mg(2+)-binding residues include Asp-82 and Asp-84. 2 residues coordinate Zn(2+): Cys-98 and Cys-105.

This sequence belongs to the PRA-CH family. Homodimer. Mg(2+) serves as cofactor. Zn(2+) is required as a cofactor.

Its subcellular location is the cytoplasm. The catalysed reaction is 1-(5-phospho-beta-D-ribosyl)-5'-AMP + H2O = 1-(5-phospho-beta-D-ribosyl)-5-[(5-phospho-beta-D-ribosylamino)methylideneamino]imidazole-4-carboxamide. It functions in the pathway amino-acid biosynthesis; L-histidine biosynthesis; L-histidine from 5-phospho-alpha-D-ribose 1-diphosphate: step 3/9. In terms of biological role, catalyzes the hydrolysis of the adenine ring of phosphoribosyl-AMP. This Bordetella bronchiseptica (strain ATCC BAA-588 / NCTC 13252 / RB50) (Alcaligenes bronchisepticus) protein is Phosphoribosyl-AMP cyclohydrolase.